A 297-amino-acid polypeptide reads, in one-letter code: Bifunctional protein FolD 1 (297 aa).

Residues 164 to 166 (GRS) and T230 each bind NADP(+).

It belongs to the tetrahydrofolate dehydrogenase/cyclohydrolase family. As to quaternary structure, homodimer.

It carries out the reaction (6R)-5,10-methylene-5,6,7,8-tetrahydrofolate + NADP(+) = (6R)-5,10-methenyltetrahydrofolate + NADPH. The enzyme catalyses (6R)-5,10-methenyltetrahydrofolate + H2O = (6R)-10-formyltetrahydrofolate + H(+). The protein operates within one-carbon metabolism; tetrahydrofolate interconversion. Its function is as follows. Catalyzes the oxidation of 5,10-methylenetetrahydrofolate to 5,10-methenyltetrahydrofolate and then the hydrolysis of 5,10-methenyltetrahydrofolate to 10-formyltetrahydrofolate. This chain is Bifunctional protein FolD 1, found in Rhodococcus jostii (strain RHA1).